Consider the following 151-residue polypeptide: Ribonuclease H (151 aa).

Residues 2–143 (SDDWVEIYTD…ADLLANRGVV (142 aa)) enclose the RNase H type-1 domain. 4 residues coordinate Mg(2+): aspartate 11, glutamate 49, aspartate 71, and aspartate 135.

It belongs to the RNase H family. In terms of assembly, monomer. Mg(2+) serves as cofactor.

The protein localises to the cytoplasm. It carries out the reaction Endonucleolytic cleavage to 5'-phosphomonoester.. In terms of biological role, endonuclease that specifically degrades the RNA of RNA-DNA hybrids. The sequence is that of Ribonuclease H from Stutzerimonas stutzeri (strain A1501) (Pseudomonas stutzeri).